We begin with the raw amino-acid sequence, 211 residues long: Large ribosomal subunit protein uL4 (211 aa).

A disordered region spans residues 40-85; the sequence is QQAHSRQGTASTLTRSEVRGGGRKPYKQKGTGRARQGSIRTPLRPG. Positions 41 to 54 are enriched in polar residues; that stretch reads QAHSRQGTASTLTR. A compositionally biased stretch (basic residues) spans 60-71; it reads GGRKPYKQKGTG.

This sequence belongs to the universal ribosomal protein uL4 family. Part of the 50S ribosomal subunit.

Its function is as follows. One of the primary rRNA binding proteins, this protein initially binds near the 5'-end of the 23S rRNA. It is important during the early stages of 50S assembly. It makes multiple contacts with different domains of the 23S rRNA in the assembled 50S subunit and ribosome. In terms of biological role, forms part of the polypeptide exit tunnel. In Prochlorococcus marinus (strain NATL2A), this protein is Large ribosomal subunit protein uL4.